Consider the following 306-residue polypeptide: UPF0282 protein Pars_1056 (306 aa).

Belongs to the UPF0282 family.

The polypeptide is UPF0282 protein Pars_1056 (Pyrobaculum arsenaticum (strain DSM 13514 / JCM 11321 / PZ6)).